The primary structure comprises 161 residues: Phosphopantetheine adenylyltransferase (161 aa).

Serine 9 is a binding site for substrate. Residues serine 9–phenylalanine 10 and histidine 17 contribute to the ATP site. Residues lysine 41, leucine 73, and lysine 87 each contribute to the substrate site. Residues glycine 88 to arginine 90, glutamate 98, and tyrosine 123 to serine 129 contribute to the ATP site.

The protein belongs to the bacterial CoaD family. As to quaternary structure, homohexamer. The cofactor is Mg(2+).

The protein resides in the cytoplasm. The enzyme catalyses (R)-4'-phosphopantetheine + ATP + H(+) = 3'-dephospho-CoA + diphosphate. The protein operates within cofactor biosynthesis; coenzyme A biosynthesis; CoA from (R)-pantothenate: step 4/5. Functionally, reversibly transfers an adenylyl group from ATP to 4'-phosphopantetheine, yielding dephospho-CoA (dPCoA) and pyrophosphate. The protein is Phosphopantetheine adenylyltransferase of Clostridium novyi (strain NT).